A 228-amino-acid chain; its full sequence is MSSTKHRIDLGTTYSCVGVFKNEQVDIIANDQGNRTTPSYVAFTETERLIGDARRTRWHEPPGNTVFDEAHDRPQVRRPDLQSDMKHWPFKVIVKDGKPVISVEYQNQTKTFSRGDLGYGAAENEGDGGGYLGTTVKDAVITVPAYFNDSQRQATKDAGSIAGLNVLRIINEPTAAAIAYGMDRKGDKGEKNVLIFDLGGGTFDVTLLTIESGVFEVKATAGDTHLGG.

The segment at 57 to 80 (RWHEPPGNTVFDEAHDRPQVRRPD) is disordered. Residues 68-80 (DEAHDRPQVRRPD) are compositionally biased toward basic and acidic residues.

This sequence belongs to the heat shock protein 70 family.

The protein is Heat shock 70-related protein 4 (HSP70.4) of Leishmania major.